The following is a 316-amino-acid chain: Ribosomal RNA small subunit methyltransferase H (316 aa).

Residues 35–37 (AGH), Asp55, Phe84, Asp105, and Gln112 contribute to the S-adenosyl-L-methionine site.

The protein belongs to the methyltransferase superfamily. RsmH family.

The protein localises to the cytoplasm. It catalyses the reaction cytidine(1402) in 16S rRNA + S-adenosyl-L-methionine = N(4)-methylcytidine(1402) in 16S rRNA + S-adenosyl-L-homocysteine + H(+). In terms of biological role, specifically methylates the N4 position of cytidine in position 1402 (C1402) of 16S rRNA. The sequence is that of Ribosomal RNA small subunit methyltransferase H from Streptococcus pneumoniae (strain JJA).